The following is a 274-amino-acid chain: Diaminopimelate epimerase (274 aa).

Positions 11, 44, and 64 each coordinate substrate. Catalysis depends on C73, which acts as the Proton donor. Residues 74 to 75 (GN), N157, N190, and 208 to 209 (ER) each bind substrate. The active-site Proton acceptor is C217. A substrate-binding site is contributed by 218 to 219 (GS).

This sequence belongs to the diaminopimelate epimerase family. In terms of assembly, homodimer (Potential). Previously DapF has been proposed to be a monomer, however it seems that it adopts a dimeric structure.

The protein resides in the cytoplasm. It catalyses the reaction (2S,6S)-2,6-diaminopimelate = meso-2,6-diaminopimelate. It functions in the pathway amino-acid biosynthesis; L-lysine biosynthesis via DAP pathway; DL-2,6-diaminopimelate from LL-2,6-diaminopimelate: step 1/1. With respect to regulation, inhibited by LL-aziridino (LL-AziDAP), DL-aziridino (DL-AziDAP). Also inhibited by (2S,3R,6S)-2,6-diamino-3-fluoropimelate (L,L-3-fluoro-DAP) and (2R,3S,6S)-2,6-diamino-3-fluoropimelate (D,L-3-fluoro-DAP). Functionally, catalyzes the stereoinversion of LL-2,6-diaminopimelate (L,L-DAP) to meso-diaminopimelate (meso-DAP), a precursor of L-lysine and an essential component of the bacterial peptidoglycan. Only accepts DAP isomers with the L configuration. This chain is Diaminopimelate epimerase, found in Haemophilus influenzae (strain ATCC 51907 / DSM 11121 / KW20 / Rd).